Reading from the N-terminus, the 583-residue chain is MATAATTSAAAIPTGGGGRRQHPHPRRPGLRPRRLHRLRLPAQAAAAAAASSPSTSSSSSSSSTPAEGGGRLVAELVGAFNELTGRMGEGLATSSSSRLLFRALKLALPALRDGDGGRALARALAIAASLADLQMDAEVISAGILREALDAGAISMRDVKSEIGISTAHLLHESLRLKHAPSKLDVLDDESASALRKFCLSYYDIRAVILELALKLDMMRHLDCLPRYLQRIKSLEVLKIYAPLAHAVGAGNLSLELEDLSFRYLFPHSYDHIDQWLRSQETENKLLIDSYKEQLLQALKDDDELSQIVQDISIQGRYKSRFSTMKKLVKDGRKPEEVNDILALRVILEPRCDGSSLDWGPRACHRTHEIIQAMWKEVPGRTKNYVTRPKENGYQSLHVAIDVSEPGKMRPLMEIQIRTKEMHKFAVGGEASHSLYKGGLTDPGEAKRLKAIMLAAAELAAMRLRDLPASDQGDSNCTNRAFCQLDKNGDGRISIEELTEVMEDLGAGGKDAKELMHLLDANSDGSLSSDEFEAFQRQIELMRSLDDKDDRYRKILKEKLQTIDSAGLIQVYRKQLGDKLLVS.

Residues 1 to 13 (MATAATTSAAAIP) are compositionally biased toward low complexity. Positions 1–68 (MATAATTSAA…SSSSSTPAEG (68 aa)) are disordered. A chloroplast-targeting transit peptide spans 1 to 69 (MATAATTSAA…SSSSTPAEGG (69 aa)). A compositionally biased stretch (basic residues) spans 19–39 (RRQHPHPRRPGLRPRRLHRLR). A compositionally biased stretch (low complexity) spans 40 to 66 (LPAQAAAAAAASSPSTSSSSSSSSTPA). An HD domain is found at 119-219 (ALARALAIAA…LELALKLDMM (101 aa)). EF-hand domains are found at residues 473–508 (GDSN…LGAG) and 510–542 (KDAK…IELM). Positions 486, 488, 490, 492, 497, 520, 522, 524, 526, and 531 each coordinate Ca(2+).

It belongs to the RelA/SpoT family. In terms of tissue distribution, expressed in roots and shoots.

The protein localises to the plastid. Its subcellular location is the chloroplast. The enzyme catalyses GTP + ATP = guanosine 3'-diphosphate 5'-triphosphate + AMP. Its activity is regulated as follows. Activated by calcium. In terms of biological role, possesses calcium-dependent ppGpp (guanosine 3'-diphosphate 5'-diphosphate) synthetase activity in vitro and is able to functionally complement E.coli relA mutants. May be involved in a rapid plant ppGpp-mediated response to pathogens and other stresses. In Oryza sativa subsp. japonica (Rice), this protein is GTP diphosphokinase CRSH1, chloroplastic.